Reading from the N-terminus, the 353-residue chain is Mitogen-activated protein kinase FUS3 (353 aa).

One can recognise a Protein kinase domain in the interval 13 to 309 (FQLKSLLGEG…AKEALEHPYL (297 aa)). Residues 19–27 (LGEGAYGVV) and K42 contribute to the ATP site. D137 functions as the Proton acceptor in the catalytic mechanism. T180 carries the phosphothreonine modification. Positions 180 to 182 (TEY) match the TXY motif. At Y182 the chain carries Phosphotyrosine. Residue K345 forms a Glycyl lysine isopeptide (Lys-Gly) (interchain with G-Cter in ubiquitin) linkage.

Belongs to the protein kinase superfamily. CMGC Ser/Thr protein kinase family. MAP kinase subfamily. In terms of assembly, in the nucleus, FUS3 forms a complex with DIG1, DIG2 and STE12. The interaction of FUS3 with STE12 depends on the presence of both DIG1 and DIG2. STE12 is lost from FUS3/DIG1/DIG2 complex after pheromone treatment. During its activation and phosphorylation, FUS3 forms a membrane-associated complex with the scaffold protein STE5, the MAPKK STE7, the MAPKKK STE11, and the G-protein beta subunit GBB/STE4; interacting directly with STE7 and STE5. The cofactor is Mg(2+). In terms of processing, dually phosphorylated on Thr-180 and Tyr-182 by STE7 in response to pheromone induction, which activates the enzyme. Activated FUS3 initiates a feedback signal, down-regulating phosphorylation of both, FUS3 and KSS1.

The protein resides in the nucleus. It is found in the cytoplasm. Its subcellular location is the periplasm. The catalysed reaction is L-seryl-[protein] + ATP = O-phospho-L-seryl-[protein] + ADP + H(+). The enzyme catalyses L-threonyl-[protein] + ATP = O-phospho-L-threonyl-[protein] + ADP + H(+). With respect to regulation, activated by tyrosine and threonine phosphorylation after pheromone treatment. Together with closely related KSS1, FUS3 is the final kinase in the signal transduction cascade regulating activation/repression of the mating and filamentation pathways, induced by pheromone and nitrogen/carbon limitation, respectively. Phosphorylated FUS3 activates the mating but suppresses the filamentation pathway, whereas activated KSS1 activates both pathways. Pheromone-activated FUS3 functions by inhibiting the binding of the transcriptional activator STE12 to filamentation specific genes while inducing its binding to and activity at mating specific genes. Non-activated FUS3 has a repressive effect on STE12 transcriptional activity. KSS1 can partially compensate for the lack of FUS3 but mating efficiency is reduced and the filamentation program is partially activated upon pheromone signaling. FUS3 phosphorylates STE7, STE5, FAR1, DIG1, DIG2 and STE12. This chain is Mitogen-activated protein kinase FUS3 (FUS3), found in Saccharomyces cerevisiae (strain ATCC 204508 / S288c) (Baker's yeast).